A 532-amino-acid polypeptide reads, in one-letter code: Vesicular acetylcholine transporter unc-17 (532 aa).

At 1–31 the chain is on the cytoplasmic side; it reads MGFNVPVINRDSEILKADAKKWLEQQDNQKK. The helical transmembrane segment at 32–52 threads the bilayer; that stretch reads CVLVIVSIALLLDNMLYMVIV. The Lumenal, vesicle portion of the chain corresponds to 53-101; the sequence is PIIPKYLRDIHNYQVTFEGYHNETSQLANGTYLVREVGGRINFLDEELE. N-linked (GlcNAc...) asparagine glycosylation is found at Asn74 and Asn81. The chain crosses the membrane as a helical span at residues 102-121; sequence LGWLFASKALLQIFVNPFSG. Residues 122–130 are Cytoplasmic-facing; it reads YIIDRVGYE. Residues 131–151 traverse the membrane as a helical segment; it reads IPMILGLCTMFFSTAIFALGK. The Lumenal, vesicle segment spans residues 152-160; it reads SYGVLLFAR. Residues 161–180 form a helical membrane-spanning segment; the sequence is SLQGFGSAFADTSGLAMIAD. Residues 181-191 are Cytoplasmic-facing; that stretch reads RFTEENERSAA. Residues 192–213 traverse the membrane as a helical segment; it reads LGIALAFISFGCLVAPPFGSVL. Residues 214–219 are Lumenal, vesicle-facing; that stretch reads YSLAGK. A helical transmembrane segment spans residues 220-242; it reads PVPFLILSFVCLADAIAVFMVIN. Residues 243 to 266 lie on the Cytoplasmic side of the membrane; it reads PHRRGTDSHGEKVQGTPMWRLFMD. The chain crosses the membrane as a helical span at residues 267 to 286; it reads PFIACCSGALIMANVSLAFL. The Lumenal, vesicle segment spans residues 287–303; it reads EPTITTWMSEMMPDTPG. Residues 304–328 traverse the membrane as a helical segment; the sequence is WLVGVIWLPPFFPHVLGVYVTVKML. The Cytoplasmic segment spans residues 329-335; sequence RAFPHHT. Residues 336–356 form a helical membrane-spanning segment; that stretch reads WAIAMVGLAMEGIACFAIPYT. The Lumenal, vesicle portion of the chain corresponds to 357 to 367; sequence TSVMQLVIPLS. The helical transmembrane segment at 368 to 388 threads the bilayer; the sequence is FVCFGIALIDTSLLPMLGHLV. Residues 389-393 lie on the Cytoplasmic side of the membrane; it reads DTRHV. Residues 394–412 traverse the membrane as a helical segment; sequence SVYGSVYAIADISYSLAYA. Residues 413-418 are Lumenal, vesicle-facing; that stretch reads FGPIIA. The chain crosses the membrane as a helical span at residues 419–440; that stretch reads GWIVTNWGFTALNIIIFATNVT. The Cytoplasmic portion of the chain corresponds to 441-532; sequence YAPVLFLLRK…AGYDPLNPQW (92 aa).

This sequence belongs to the major facilitator superfamily. Vesicular transporter family. Detected in most regions of the nervous system including the nerve ring, the ventral and dorsal nerve cords, and the pharyngeal nervous system. Expressed in most cholinergic neurons. In addition, expressed in SIA, SIB and SMB sublateral motor neurons.

It localises to the cytoplasmic vesicle. Its subcellular location is the secretory vesicle. It is found in the synaptic vesicle membrane. Functionally, involved in acetylcholine transport into synaptic vesicles. This is Vesicular acetylcholine transporter unc-17 from Caenorhabditis elegans.